The chain runs to 114 residues: MNKLIDEITKSQLNPDVPNFRPGDTVRVHAKVVEGTRERIQLFEGVVIKRRGAGISETFTVRKISNSVGVERTFPVHTPRIAKLEVIRRGKVRRAKLYYLRNLRGKAARIKEIR.

Belongs to the bacterial ribosomal protein bL19 family.

Functionally, this protein is located at the 30S-50S ribosomal subunit interface and may play a role in the structure and function of the aminoacyl-tRNA binding site. The protein is Large ribosomal subunit protein bL19 (rplS) of Listeria monocytogenes serovar 1/2a (strain ATCC BAA-679 / EGD-e).